We begin with the raw amino-acid sequence, 314 residues long: tRNA dimethylallyltransferase (314 aa).

10–17 (GPTGVGKT) serves as a coordination point for ATP. 12 to 17 (TGVGKT) provides a ligand contact to substrate. The interaction with substrate tRNA stretch occupies residues 35–38 (DSMQ).

This sequence belongs to the IPP transferase family. Monomer. Mg(2+) serves as cofactor.

The enzyme catalyses adenosine(37) in tRNA + dimethylallyl diphosphate = N(6)-dimethylallyladenosine(37) in tRNA + diphosphate. In terms of biological role, catalyzes the transfer of a dimethylallyl group onto the adenine at position 37 in tRNAs that read codons beginning with uridine, leading to the formation of N6-(dimethylallyl)adenosine (i(6)A). In Finegoldia magna (strain ATCC 29328 / DSM 20472 / WAL 2508) (Peptostreptococcus magnus), this protein is tRNA dimethylallyltransferase.